The primary structure comprises 207 residues: Phenazine biosynthesis protein PhzD1 (207 aa).

Asp-38 functions as the Proton donor in the catalytic mechanism. Residues Gln-78, Arg-87, Lys-122, and Tyr-151–Gly-155 each bind substrate.

The protein belongs to the isochorismatase family. In terms of assembly, homodimer.

It carries out the reaction (2S)-2-amino-4-deoxychorismate + H2O = (5S,6S)-6-amino-5-hydroxycyclohexa-1,3-diene-1-carboxyate + pyruvate. It participates in antibiotic biosynthesis; phenazine biosynthesis. Its function is as follows. Involved in the biosynthesis of the antibiotic phenazine, a nitrogen-containing heterocyclic molecule. PhzD1 (operon phzA1B1C1E1F1G1) has a role in the biosynthesis of the phenazine during planktonic growth. Catalyzes the hydrolysis of the vinyl ether functional group of 2-amino-2-deoxyisochorismate (ADIC), yielding pyruvate and trans-2,3-dihydro-3-hydroxyanthranilic acid (DHHA). Also able to act on isochorismate, chorismate and 4-amino-4-deoxychorismate (ADC) as substrates. This is Phenazine biosynthesis protein PhzD1 from Pseudomonas aeruginosa (strain ATCC 15692 / DSM 22644 / CIP 104116 / JCM 14847 / LMG 12228 / 1C / PRS 101 / PAO1).